The primary structure comprises 464 residues: Tyrosine aminotransferase (464 aa).

At Lys284 the chain carries N6-(pyridoxal phosphate)lysine.

This sequence belongs to the class-I pyridoxal-phosphate-dependent aminotransferase family. Homodimer. It depends on pyridoxal 5'-phosphate as a cofactor. As to expression, expressed in the muscle. Expressed in the hypodermis and intestine.

The catalysed reaction is L-tyrosine + 2-oxoglutarate = 3-(4-hydroxyphenyl)pyruvate + L-glutamate. It catalyses the reaction 3-hydroxy-L-phenylalanine + 2-oxoglutarate = 3-(3-hydroxyphenyl)pyruvate + L-glutamate. It participates in amino-acid degradation; L-phenylalanine degradation; acetoacetate and fumarate from L-phenylalanine: step 2/6. In terms of biological role, transaminase involved in tyrosine breakdown. Converts tyrosine to p-hydroxyphenylpyruvate. Has no transaminase activity towards phenylalanine. Plays protective role against oxidative stress, metabolizing meta-tyrosine and negatively regulating its accumulation. Plays a role in modulating the daf-2/insulin receptor-like transduction pathway through regulating tyrosine levels. Negatively regulates dauer formation. Plays a role in longevity. The sequence is that of Tyrosine aminotransferase from Caenorhabditis elegans.